The following is a 100-amino-acid chain: Urease subunit gamma (100 aa).

It belongs to the urease gamma subunit family. Heterotrimer of UreA (gamma), UreB (beta) and UreC (alpha) subunits. Three heterotrimers associate to form the active enzyme.

It is found in the cytoplasm. It catalyses the reaction urea + 2 H2O + H(+) = hydrogencarbonate + 2 NH4(+). The protein operates within nitrogen metabolism; urea degradation; CO(2) and NH(3) from urea (urease route): step 1/1. The chain is Urease subunit gamma from Chromohalobacter salexigens (strain ATCC BAA-138 / DSM 3043 / CIP 106854 / NCIMB 13768 / 1H11).